We begin with the raw amino-acid sequence, 550 residues long: ATP-dependent RNA helicase MSS116, mitochondrial (550 aa).

Positions 1–11 (MPPPPKRKWPN) are enriched in basic residues. Residues 1–41 (MPPPPKRKWPNRPRGGGGANGSASGTPTTPRSTVAQQPKRP) constitute a mitochondrion transit peptide. The segment at 1–51 (MPPPPKRKWPNRPRGGGGANGSASGTPTTPRSTVAQQPKRPKVEDAAPAAE) is disordered. A Q motif motif is present at residues 71-99 (FSELSSVLDKSLLDGLDKMGFEFMSPVQQ). Residues 103–285 (TELPSLSSDC…KIVLFPGFTH (183 aa)) enclose the Helicase ATP-binding domain. ATP is bound at residue 116 to 123 (AKTGTGKT). The DEAD box motif lies at 230 to 233 (DEAD). The region spanning 316-472 (ALSALIQEEH…KVPEQEAAIT (157 aa)) is the Helicase C-terminal domain.

Belongs to the DEAD box helicase family. DDX18/HAS1 subfamily.

It localises to the mitochondrion matrix. The enzyme catalyses ATP + H2O = ADP + phosphate + H(+). Functionally, ATP-dependent RNA helicase required for mitochondrial splicing of group I and II introns. Also required for efficient mitochondrial translation. The sequence is that of ATP-dependent RNA helicase MSS116, mitochondrial (MSS116) from Phaeosphaeria nodorum (strain SN15 / ATCC MYA-4574 / FGSC 10173) (Glume blotch fungus).